The chain runs to 867 residues: Bifunctional diterpene synthase, chloroplastic (867 aa).

The transit peptide at 1 to 55 directs the protein to the chloroplast; sequence MAKVLFSSFQQTGISGSLKSGQLSGVFINGTNLKSNAHAKRFRKNSTSSITIRCC. K255 lines the substrate pocket. Positions 389 and 391 each coordinate Mg(2+). The short motif at 389 to 392 is the DXDD motif element; sequence DIDD. Position 474 (K474) interacts with substrate. Mg(2+)-binding residues include D611, D615, N758, T762, and E766. The DDXXD motif motif lies at 611–615; the sequence is DDLMD.

This sequence belongs to the terpene synthase family. The cofactor is Mg(2+).

The protein resides in the plastid. It is found in the chloroplast. It carries out the reaction (+)-copalyl diphosphate = miltiradiene + diphosphate. The enzyme catalyses (2E,6E,10E)-geranylgeranyl diphosphate = (+)-copalyl diphosphate. The protein operates within secondary metabolite biosynthesis; terpenoid biosynthesis. In terms of biological role, bifunctional diterpene cyclase that catalyzes the successive two-step type-B (protonation-initiated cyclization) and type-A (ionization-initiated cyclization) reactions of geranylgeranyl diphosphate (GGDP) producing successively (+)-copalyl diphosphate and miltiradiene. In Selaginella moellendorffii (Spikemoss), this protein is Bifunctional diterpene synthase, chloroplastic (MDS).